A 233-amino-acid polypeptide reads, in one-letter code: tRNA (guanine-N(7)-)-methyltransferase (233 aa).

E62, E87, D116, and D138 together coordinate S-adenosyl-L-methionine. D138 is a catalytic residue. Substrate-binding positions include K142, D174, and 212-215 (TRYE).

The protein belongs to the class I-like SAM-binding methyltransferase superfamily. TrmB family.

The catalysed reaction is guanosine(46) in tRNA + S-adenosyl-L-methionine = N(7)-methylguanosine(46) in tRNA + S-adenosyl-L-homocysteine. Its pathway is tRNA modification; N(7)-methylguanine-tRNA biosynthesis. Functionally, catalyzes the formation of N(7)-methylguanine at position 46 (m7G46) in tRNA. This is tRNA (guanine-N(7)-)-methyltransferase from Bartonella quintana (strain Toulouse) (Rochalimaea quintana).